The chain runs to 964 residues: Translation initiation factor IF-2 (964 aa).

Residues 26–375 (AAGVSKRSPE…QNNQHAFQAP (350 aa)) are disordered. Composition is skewed to basic and acidic residues over residues 49-60 (YLKRSHGAREDS), 91-103 (VRPD…EAPK), 118-154 (AKPE…KPEP), 174-206 (IAAR…ERRQ), 225-236 (PQREERRDDRRG), 243-252 (RGPRGNDNRG), and 328-339 (KGGERSWDDNKK). Positions 464-633 (PRSPVVTVMG…LLQAEVLELK (170 aa)) constitute a tr-type G domain. The segment at 473-480 (GHVDHGKT) is G1. 473-480 (GHVDHGKT) provides a ligand contact to GTP. Residues 498 to 502 (GITQH) form a G2 region. Residues 519–522 (DTPG) form a G3 region. Residues 519-523 (DTPGH) and 573-576 (NKID) contribute to the GTP site. The segment at 573 to 576 (NKID) is G4. The tract at residues 609–611 (SAK) is G5.

The protein belongs to the TRAFAC class translation factor GTPase superfamily. Classic translation factor GTPase family. IF-2 subfamily.

The protein resides in the cytoplasm. One of the essential components for the initiation of protein synthesis. Protects formylmethionyl-tRNA from spontaneous hydrolysis and promotes its binding to the 30S ribosomal subunits. Also involved in the hydrolysis of GTP during the formation of the 70S ribosomal complex. In Chromobacterium violaceum (strain ATCC 12472 / DSM 30191 / JCM 1249 / CCUG 213 / NBRC 12614 / NCIMB 9131 / NCTC 9757 / MK), this protein is Translation initiation factor IF-2.